The following is a 2511-amino-acid chain: Chromodomain-helicase-DNA-binding protein 8 (2511 aa).

The disordered stretch occupies residues 484–615 (PRVLNQDELP…RSNRQVKRKK (132 aa)). Gly residues predominate over residues 515-524 (GGGVGGGGGG). Residues 604 to 615 (KRRSNRQVKRKK) are compositionally biased toward basic residues. Chromo domains are found at residues 680–745 (AIVD…AQMR) and 760–826 (VEVD…RTPR). The 175-residue stretch at 859 to 1033 (LFNWYNRQNC…FSLLHFLEPA (175 aa)) folds into the Helicase ATP-binding domain. Residue 872 to 879 (DEMGLGKT) participates in ATP binding. A DEAH box motif is present at residues 984 to 987 (DEAH). The Helicase C-terminal domain maps to 1174 to 1330 (LLDKLLPRLK…SMSGNKESSI (157 aa)). 4 disordered regions span residues 1440 to 1482 (TRQF…HSGG), 1715 to 1736 (EQQAADPELGEGGDYDKYSEDP), 2086 to 2168 (SKNN…LTDP), and 2468 to 2511 (PSAL…SSED). Residues 1452-1461 (DLSDLDSDDD) are compositionally biased toward acidic residues. The segment covering 2111–2125 (DSGSSSSSRHSGSSD) has biased composition (low complexity).

It belongs to the SNF2/RAD54 helicase family. CHD8 subfamily. As to quaternary structure, component of some MLL1/MLL complex.

It localises to the nucleus. The enzyme catalyses ATP + H2O = ADP + phosphate + H(+). Its function is as follows. ATP-dependent chromatin-remodeling factor, it slides nucleosomes along DNA; nucleosome sliding requires ATP. Acts as a transcription repressor by remodeling chromatin structure and recruiting histone H1 to target genes. Suppresses p53/tp53-mediated apoptosis by recruiting histone H1 and preventing p53/tp53 transactivation activity. Acts as a negative regulator of Wnt signaling pathway by regulating beta-catenin (ctnnb1) activity. Negatively regulates ctnnb1-targeted gene expression by being recruited specifically to the promoter regions of several ctnnb1 responsive genes. May also act as a transcription activator by participating in efficient U6 RNA polymerase III transcription. This Danio rerio (Zebrafish) protein is Chromodomain-helicase-DNA-binding protein 8.